A 226-amino-acid chain; its full sequence is MRPPPFPKPAHPEEALALQRALAKKVRLAGSLEGVRRIAALDASHKRGRPLVAVALLYDLEKGPLHVATALLPEEALFPYVPGLLSFREAPAYLEALAALPEAPEALLVDGQGVAHPRGLGIASHLGVHLDLPSVGVAKRLLYGRPEAPLPEEKGAAVRLLAPDGRPLGYVYRSRTGVKPLYVSPGHRVGLEEALRFVRRLPTRFRLPEPLRLAHLEAGRALKALD.

Positions 42 and 110 each coordinate Mg(2+).

It belongs to the endonuclease V family. The cofactor is Mg(2+).

It localises to the cytoplasm. The enzyme catalyses Endonucleolytic cleavage at apurinic or apyrimidinic sites to products with a 5'-phosphate.. Functionally, DNA repair enzyme involved in the repair of deaminated bases. Selectively cleaves double-stranded DNA at the second phosphodiester bond 3' to a deoxyinosine leaving behind the intact lesion on the nicked DNA. The polypeptide is Endonuclease V (Thermus thermophilus (strain ATCC BAA-163 / DSM 7039 / HB27)).